Reading from the N-terminus, the 245-residue chain is MNVILLIPARYGSSRFPGKPLAPINGKPMIQHVYERASLAKGLTNIYVATDDERIKATVEGFGGKVVMTSPDAASGTDRINEAIKLLGLKDDDLVINVQGDQPLIDPTAIEQLINLFERQPGEFEMATLGYEIVNKADIDDPMQVKMVFDNNYYALYFSRSRIPFGRDTQDYPVFKHLGIYAYTSKFVQTFAALPLGRLEDLEKLEQLRALEHGHKIKIAISASNSLEVDRPEDIHKCEQRLAAS.

It belongs to the KdsB family.

The protein resides in the cytoplasm. The catalysed reaction is 8-amino-3,8-dideoxy-alpha-D-manno-octulosonate + CTP = CMP-8-amino-3,8-dideoxy-alpha-D-manno-oct-2-ulosonate + diphosphate. It functions in the pathway bacterial outer membrane biogenesis; lipopolysaccharide biosynthesis. Activates KDO8N (a required 8-carbon sugar) for incorporation into bacterial lipopolysaccharide in the Shewanella genus. This chain is 8-amino-3,8-dideoxy-manno-octulosonate cytidylyltransferase, found in Shewanella putrefaciens (strain CN-32 / ATCC BAA-453).